Here is a 247-residue protein sequence, read N- to C-terminus: Complement C1q subcomponent subunit A (247 aa).

The signal sequence occupies residues 1 to 24 (MEAPRGWLVIMISVLAVSLASSAA). Residues 26 to 116 (DTCRDLDGRD…NPGNIKDQRR (91 aa)) are disordered. Basic and acidic residues predominate over residues 27–38 (TCRDLDGRDGAA). In terms of domain architecture, Collagen-like spans 33 to 111 (GRDGAARKPG…KGIKGNPGNI (79 aa)). 4-hydroxyproline occurs at positions 41 and 47. K50 bears the 5-hydroxylysine mark. K50 carries an O-linked (Gal...) hydroxylysine glycan. Residues P56 and P59 each carry the 4-hydroxyproline modification. K69 is subject to 5-hydroxylysine. O-linked (Gal...) hydroxylysine glycosylation is present at K69. 2 positions are modified to 4-hydroxyproline: P81 and P87. Over residues 98 to 109 (LPGLKGIKGNPG) the composition is skewed to low complexity. K102 carries the 5-hydroxylysine modification. A glycan (O-linked (Gal...) hydroxylysine) is linked at K102. The region spanning 112-247 (KDQRRPAFSA…FSGFLIFPST (136 aa)) is the C1q domain. A disulfide bond links C174 and C192. Residue Q201 coordinates Ca(2+).

As to quaternary structure, core component of the complement C1 complex, a calcium-dependent complex composed of 1 molecule of the C1Q subcomplex, 2 molecules of C1R and 2 molecules of C1S. The C1Q subcomplex is composed 18 subunits: 3 chains of C1QA, C1QB, and C1QC trimerize to form 6 collagen-like triple helices connected to six globular ligand-recognition modules (C1q domain). Interacts with CR1 (via Sushi 24 and Sushi 25 domains). Interacts (via C-terminus) with CD33; this interaction activates CD33 inhibitory motifs. Post-translationally, O-linked glycans are assumed to be the Glc-Gal disaccharides typically found as secondary modifications of hydroxylated lysines in collagen-like domains.

Its subcellular location is the secreted. The protein resides in the cell surface. The C1Q subcomplex is inhibited by sulfated molecules, such as triterpenoid sulfates, heparan sulfate, or chondroitin sulfates. Its function is as follows. Core component of the complement C1 complex, a multiprotein complex that initiates the classical pathway of the complement system, a cascade of proteins that leads to phagocytosis and breakdown of pathogens and signaling that strengthens the adaptive immune system. The classical complement pathway is initiated by the C1Q subcomplex of the C1 complex, which specifically binds IgG or IgM immunoglobulins complexed with antigens, forming antigen-antibody complexes on the surface of pathogens: C1QA, together with C1QB and C1QC, specifically recognizes and binds the Fc regions of IgG or IgM via its C1q domain. Immunoglobulin-binding activates the proenzyme C1R, which cleaves C1S, initiating the proteolytic cascade of the complement system. The C1Q subcomplex is activated by a hexamer of IgG complexed with antigens, while it is activated by a pentameric IgM. The C1Q subcomplex also recognizes and binds phosphatidylserine exposed on the surface of cells undergoing programmed cell death, possibly promoting activation of the complement system. The chain is Complement C1q subcomponent subunit A (C1QA) from Sus scrofa (Pig).